The following is a 238-amino-acid chain: 2-C-methyl-D-erythritol 4-phosphate cytidylyltransferase (238 aa).

Belongs to the IspD/TarI cytidylyltransferase family. IspD subfamily.

It catalyses the reaction 2-C-methyl-D-erythritol 4-phosphate + CTP + H(+) = 4-CDP-2-C-methyl-D-erythritol + diphosphate. It functions in the pathway isoprenoid biosynthesis; isopentenyl diphosphate biosynthesis via DXP pathway; isopentenyl diphosphate from 1-deoxy-D-xylulose 5-phosphate: step 2/6. In terms of biological role, catalyzes the formation of 4-diphosphocytidyl-2-C-methyl-D-erythritol from CTP and 2-C-methyl-D-erythritol 4-phosphate (MEP). This chain is 2-C-methyl-D-erythritol 4-phosphate cytidylyltransferase, found in Acinetobacter baumannii (strain ACICU).